The primary structure comprises 337 residues: Large ribosomal subunit protein uL3 (337 aa).

Residues 1 to 20 are disordered; sequence MASIHRPKRGSLAFSPRKRA.

The protein belongs to the universal ribosomal protein uL3 family. In terms of assembly, part of the 50S ribosomal subunit. Forms a cluster with proteins L14 and L24e.

Its function is as follows. One of the primary rRNA binding proteins, it binds directly near the 3'-end of the 23S rRNA, where it nucleates assembly of the 50S subunit. The chain is Large ribosomal subunit protein uL3 from Methanosarcina barkeri (strain Fusaro / DSM 804).